The sequence spans 121 residues: Apoptin (121 aa).

Disordered regions lie at residues 1–28 (MNAL…LETP) and 57–121 (LRSA…RIRL). Over residues 58–70 (RSATADNSESTGF) the composition is skewed to polar residues. A compositionally biased stretch (basic and acidic residues) spans 88-102 (RSCDPSEYRVSELKE).

It belongs to the gyrovirus apoptin family.

It is found in the host nucleus. May act as transcriptional regulator. Induces apoptosis in infected cells. Element of infectious replication cycle. In Gallus gallus (Chicken), this protein is Apoptin (VP3).